The sequence spans 192 residues: Signal peptidase complex catalytic subunit SEC11C (192 aa).

The Cytoplasmic portion of the chain corresponds to 1-28 (MVRAGAVGTHLPTSSLDIFGDLRKMNKR). The chain crosses the membrane as a helical; Signal-anchor for type II membrane protein span at residues 29–48 (QLYYQVLNFAMIVSSALMIW). Over 49-192 (KGLIVLTGSE…GAYVLLKRES (144 aa)) the chain is Lumenal. Catalysis depends on charge relay system residues serine 68, histidine 108, and aspartate 134. The tract at residues 177–188 (ALVAVMGAYVLL) is C-terminal short (CTS) helix.

The protein belongs to the peptidase S26B family. In terms of assembly, component of the signal peptidase complex paralog C (SPC-C) composed of a catalytic subunit SEC11C and three accessory subunits SPCS1, SPCS2 and SPCS3. Within the complex, interacts with SPCS2 and SPCS3. The complex induces a local thinning of the ER membrane which is used to measure the length of the signal peptide (SP) h-region of protein substrates. This ensures the selectivity of the complex towards h-regions shorter than 18-20 amino acids. May undergo processing at the N-terminus.

It is found in the endoplasmic reticulum membrane. It catalyses the reaction Cleavage of hydrophobic, N-terminal signal or leader sequences from secreted and periplasmic proteins.. Its function is as follows. Catalytic component of the signal peptidase complex (SPC) which catalyzes the cleavage of N-terminal signal sequences from nascent proteins as they are translocated into the lumen of the endoplasmic reticulum. Specifically cleaves N-terminal signal peptides that contain a hydrophobic alpha-helix (h-region) shorter than 18-20 amino acids. The protein is Signal peptidase complex catalytic subunit SEC11C (Sec11c) of Rattus norvegicus (Rat).